A 376-amino-acid chain; its full sequence is Lateral eye opsin (376 aa).

Over 1 to 46 (MANQLSYSSLGWPYQPNASVVDTMPKEMLYMIHEHWYAFPPMNPLW) the chain is Extracellular. N-linked (GlcNAc...) asparagine glycosylation occurs at N17. Residues 47–71 (YSILGVAMIILGIICVLGNGMVIYL) traverse the membrane as a helical segment. Topologically, residues 72–83 (MMTTKSLRTPTN) are cytoplasmic. Residues 84–108 (LLVVNLAFSDFCMMAFMMPTMTSNC) traverse the membrane as a helical segment. Residues 109 to 123 (FAETWILGPFMCEVY) lie on the Extracellular side of the membrane. Residues C120 and C197 are joined by a disulfide bond. The chain crosses the membrane as a helical span at residues 124–143 (GMAGSLFGCASIWSMVMITL). Over 144–162 (DRYNVIVRGMAAAPLTHKK) the chain is Cytoplasmic. Residues 163 to 186 (ATLLLLFVWIWSGGWTILPFFGWS) traverse the membrane as a helical segment. The Extracellular portion of the chain corresponds to 187 to 210 (RYVPEGNLTSCTVDYLTKDWSSAS). N-linked (GlcNAc...) asparagine glycosylation is present at N193. A helical membrane pass occupies residues 211 to 238 (YVVIYGLAVYFLPLITMIYCYFFIVHAV). Topologically, residues 239–274 (AEHEKQLREQAKKMNVASLRANADQQKQSAECRLAK) are cytoplasmic. The helical transmembrane segment at 275 to 298 (VAMMTVGLWFMAWTPYLIISWAGV) threads the bilayer. At 299–306 (FSSGTRLT) the chain is on the extracellular side. Residues 307-331 (PLATIWGSVFAKANSCYNPIVYGIS) traverse the membrane as a helical segment. K318 bears the N6-(retinylidene)lysine mark. The Cytoplasmic segment spans residues 332–376 (HPRYKAALYQRFPSLACGSGESGSDVKSEASATTTMEEKPKIPEA). The tract at residues 349-376 (GSGESGSDVKSEASATTTMEEKPKIPEA) is disordered. Over residues 367–376 (MEEKPKIPEA) the composition is skewed to basic and acidic residues.

It belongs to the G-protein coupled receptor 1 family. Opsin subfamily. Post-translationally, phosphorylated on some or all of the serine and threonine residues present in the C-terminal region. As to expression, lateral eye.

It localises to the membrane. In terms of biological role, visual pigments are the light-absorbing molecules that mediate vision. They consist of an apoprotein, opsin, covalently linked to cis-retinal. The polypeptide is Lateral eye opsin (Limulus polyphemus (Atlantic horseshoe crab)).